Reading from the N-terminus, the 305-residue chain is Putative S-adenosyl-L-methionine-dependent methyltransferase MAB_3787 (305 aa).

Residues D132 and 161–162 (DL) each bind S-adenosyl-L-methionine.

The protein belongs to the UPF0677 family.

Exhibits S-adenosyl-L-methionine-dependent methyltransferase activity. This Mycobacteroides abscessus (strain ATCC 19977 / DSM 44196 / CCUG 20993 / CIP 104536 / JCM 13569 / NCTC 13031 / TMC 1543 / L948) (Mycobacterium abscessus) protein is Putative S-adenosyl-L-methionine-dependent methyltransferase MAB_3787.